A 258-amino-acid chain; its full sequence is MLAKRIIPCLDVRDGQVVKGVQFRNHEIIGDIVPLAKRYAEEGADELVFYDITASSDGRVVDKSWVSRVAEVIDIPFCVAGGIKSLDDAAKILSFGADKISINSPALADPTLITRLADRFGVQCIVVGIDTWYDGETGKYHVNQYTGDESRTRVTQWETLDWVQEVQKRGAGEIVLNMMNQDGVRNGYDLEQLKKVREVCHVPLIASGGAGTMEHFLEAFRDADVDGALAASVFHKQIINIGELKAYLATQGVEIRIC.

Active-site residues include Asp-11 and Asp-130.

Belongs to the HisA/HisF family. Heterodimer of HisH and HisF.

It is found in the cytoplasm. It carries out the reaction 5-[(5-phospho-1-deoxy-D-ribulos-1-ylimino)methylamino]-1-(5-phospho-beta-D-ribosyl)imidazole-4-carboxamide + L-glutamine = D-erythro-1-(imidazol-4-yl)glycerol 3-phosphate + 5-amino-1-(5-phospho-beta-D-ribosyl)imidazole-4-carboxamide + L-glutamate + H(+). It participates in amino-acid biosynthesis; L-histidine biosynthesis; L-histidine from 5-phospho-alpha-D-ribose 1-diphosphate: step 5/9. Its function is as follows. IGPS catalyzes the conversion of PRFAR and glutamine to IGP, AICAR and glutamate. The HisF subunit catalyzes the cyclization activity that produces IGP and AICAR from PRFAR using the ammonia provided by the HisH subunit. This is Imidazole glycerol phosphate synthase subunit HisF from Shigella boydii serotype 18 (strain CDC 3083-94 / BS512).